The primary structure comprises 330 residues: Phospho-N-acetylmuramoyl-pentapeptide-transferase (330 aa).

10 consecutive transmembrane segments (helical) span residues 3 to 23 (SVVLGAAVAFFVTVTLGSSFI), 49 to 69 (TPTMGGVLMLMGLVAGLAVVA), 71 to 91 (PNPATFSVLLIVAATAGVGLY), 111 to 131 (FLLLSLVVVLADVMALRYVGV), 145 to 165 (VLGPGVVGVGLFSVLMLFVIV), 179 to 199 (GLAAGAGGIALLTYTAIAFLE), 204 to 224 (LAIICGAMVGAIIGFLWYNSH), 228 to 248 (IFMGDTGSLAIGGVLSAAAIL), 256 to 276 (PVIGGLFVIVALSVMIQVVVF), and 307 to 327 (FWIVQSAFSALGFLMYYFFLY).

It belongs to the glycosyltransferase 4 family. MraY subfamily. The cofactor is Mg(2+).

It localises to the cell membrane. It carries out the reaction UDP-N-acetyl-alpha-D-muramoyl-L-alanyl-gamma-D-glutamyl-meso-2,6-diaminopimeloyl-D-alanyl-D-alanine + di-trans,octa-cis-undecaprenyl phosphate = di-trans,octa-cis-undecaprenyl diphospho-N-acetyl-alpha-D-muramoyl-L-alanyl-D-glutamyl-meso-2,6-diaminopimeloyl-D-alanyl-D-alanine + UMP. The protein operates within cell wall biogenesis; peptidoglycan biosynthesis. In terms of biological role, catalyzes the initial step of the lipid cycle reactions in the biosynthesis of the cell wall peptidoglycan: transfers peptidoglycan precursor phospho-MurNAc-pentapeptide from UDP-MurNAc-pentapeptide onto the lipid carrier undecaprenyl phosphate, yielding undecaprenyl-pyrophosphoryl-MurNAc-pentapeptide, known as lipid I. The chain is Phospho-N-acetylmuramoyl-pentapeptide-transferase from Rubrobacter xylanophilus (strain DSM 9941 / JCM 11954 / NBRC 16129 / PRD-1).